We begin with the raw amino-acid sequence, 449 residues long: tRNA (guanine(37)-N(1))-methyltransferase (449 aa).

S-adenosyl-L-methionine-binding positions include histidine 216, 254–255 (DL), 282–283 (DG), and asparagine 345.

This sequence belongs to the class I-like SAM-binding methyltransferase superfamily. TRM5/TYW2 family. As to quaternary structure, monomer.

It is found in the mitochondrion matrix. Its subcellular location is the nucleus. The protein resides in the cytoplasm. The catalysed reaction is guanosine(37) in tRNA + S-adenosyl-L-methionine = N(1)-methylguanosine(37) in tRNA + S-adenosyl-L-homocysteine + H(+). Specifically methylates the N1 position of guanosine-37 in various cytoplasmic and mitochondrial tRNAs. Methylation is not dependent on the nature of the nucleoside 5' of the target nucleoside. This is the first step in the biosynthesis of wybutosine (yW), a modified base adjacent to the anticodon of tRNAs and required for accurate decoding. The polypeptide is tRNA (guanine(37)-N(1))-methyltransferase (Candida albicans (strain SC5314 / ATCC MYA-2876) (Yeast)).